The primary structure comprises 441 residues: uncharacterized protein (441 aa).

Helical transmembrane passes span 68–88 (MAIAGAFAVLFLPYSLLGPFA), 110–130 (ALIAGVGTILAVGAGDVPLLV), 131–151 (GALVANGLARFVASGLSAALP), 164–184 (SVAIASGAVSAFLGANFMLLP), 194–214 (GASAIVFLVAIPVSIALLWSL), 229–246 (AIHGSAVYAVVTGWLHGA), 260–280 (SGLAAHRMVVGINSLLILLLV), 287–307 (AVGGLGTALLFFAATGLGAFL), 337–357 (VAAAGLLVPVMVVCGFLLGVA), 384–404 (VQDALFWVSYILSITVAAALI), and 412–432 (VFVLFGSAIYLAGLVVHTIVG).

It belongs to the major facilitator superfamily.

The protein resides in the cell membrane. This is an uncharacterized protein from Mycobacterium tuberculosis (strain ATCC 25618 / H37Rv).